Here is a 364-residue protein sequence, read N- to C-terminus: tRNA 2-selenouridine synthase (364 aa).

The Rhodanese domain occupies 14-137 (LLADTPLIDV…LRQTAIQATW (124 aa)). The active-site S-selanylcysteine intermediate is Cys-97.

Belongs to the SelU family. Monomer.

It catalyses the reaction 5-methylaminomethyl-2-thiouridine(34) in tRNA + selenophosphate + (2E)-geranyl diphosphate + H2O + H(+) = 5-methylaminomethyl-2-selenouridine(34) in tRNA + (2E)-thiogeraniol + phosphate + diphosphate. The enzyme catalyses 5-methylaminomethyl-2-thiouridine(34) in tRNA + (2E)-geranyl diphosphate = 5-methylaminomethyl-S-(2E)-geranyl-thiouridine(34) in tRNA + diphosphate. It carries out the reaction 5-methylaminomethyl-S-(2E)-geranyl-thiouridine(34) in tRNA + selenophosphate + H(+) = 5-methylaminomethyl-2-(Se-phospho)selenouridine(34) in tRNA + (2E)-thiogeraniol. The catalysed reaction is 5-methylaminomethyl-2-(Se-phospho)selenouridine(34) in tRNA + H2O = 5-methylaminomethyl-2-selenouridine(34) in tRNA + phosphate. In terms of biological role, involved in the post-transcriptional modification of the uridine at the wobble position (U34) of tRNA(Lys), tRNA(Glu) and tRNA(Gln). Catalyzes the conversion of 2-thiouridine (S2U-RNA) to 2-selenouridine (Se2U-RNA). Acts in a two-step process involving geranylation of 2-thiouridine (S2U) to S-geranyl-2-thiouridine (geS2U) and subsequent selenation of the latter derivative to 2-selenouridine (Se2U) in the tRNA chain. In Salmonella typhi, this protein is tRNA 2-selenouridine synthase.